The primary structure comprises 505 residues: Cytochrome P450 76A2 (505 aa).

Cys-448 lines the heme pocket.

Belongs to the cytochrome P450 family. Requires heme as cofactor.

This Solanum melongena (Eggplant) protein is Cytochrome P450 76A2 (CYP76A2).